The sequence spans 361 residues: Queuine tRNA-ribosyltransferase (361 aa).

D92 functions as the Proton acceptor in the catalytic mechanism. Substrate is bound by residues 92-96 (DSGGF), D146, Q189, and G216. Residues 247–253 (GVGKPAD) are RNA binding. The active-site Nucleophile is D266. An RNA binding; important for wobble base 34 recognition region spans residues 271–275 (TRSGR). The Zn(2+) site is built by C304, C306, C309, and H335.

This sequence belongs to the queuine tRNA-ribosyltransferase family. Homodimer. Within each dimer, one monomer is responsible for RNA recognition and catalysis, while the other monomer binds to the replacement base PreQ1. Zn(2+) serves as cofactor.

The enzyme catalyses 7-aminomethyl-7-carbaguanine + guanosine(34) in tRNA = 7-aminomethyl-7-carbaguanosine(34) in tRNA + guanine. It functions in the pathway tRNA modification; tRNA-queuosine biosynthesis. Functionally, catalyzes the base-exchange of a guanine (G) residue with the queuine precursor 7-aminomethyl-7-deazaguanine (PreQ1) at position 34 (anticodon wobble position) in tRNAs with GU(N) anticodons (tRNA-Asp, -Asn, -His and -Tyr). Catalysis occurs through a double-displacement mechanism. The nucleophile active site attacks the C1' of nucleotide 34 to detach the guanine base from the RNA, forming a covalent enzyme-RNA intermediate. The proton acceptor active site deprotonates the incoming PreQ1, allowing a nucleophilic attack on the C1' of the ribose to form the product. After dissociation, two additional enzymatic reactions on the tRNA convert PreQ1 to queuine (Q), resulting in the hypermodified nucleoside queuosine (7-(((4,5-cis-dihydroxy-2-cyclopenten-1-yl)amino)methyl)-7-deazaguanosine). This Rickettsia akari (strain Hartford) protein is Queuine tRNA-ribosyltransferase.